Reading from the N-terminus, the 474-residue chain is Trigger factor (474 aa).

The PPIase FKBP-type domain maps to 171–258; sequence GDVAVIDFQG…LKELKTRDLP (88 aa). The tract at residues 441–474 is disordered; sequence TEVDAASATVETTATETAEEAPEAPKAKKGKKKA. Over residues 444–456 the composition is skewed to low complexity; that stretch reads DAASATVETTATE.

It belongs to the FKBP-type PPIase family. Tig subfamily.

Its subcellular location is the cytoplasm. It carries out the reaction [protein]-peptidylproline (omega=180) = [protein]-peptidylproline (omega=0). Its function is as follows. Involved in protein export. Acts as a chaperone by maintaining the newly synthesized protein in an open conformation. Functions as a peptidyl-prolyl cis-trans isomerase. The chain is Trigger factor from Synechococcus elongatus (strain ATCC 33912 / PCC 7942 / FACHB-805) (Anacystis nidulans R2).